The primary structure comprises 1163 residues: Genome polyprotein (1163 aa).

Topologically, residues 1-104 are cytoplasmic; sequence MSGRKAQGKT…LSSRKRRSYE (104 aa). The segment at 38–72 is hydrophobic; homodimerization of capsid protein C; it reads PGPSRGVQGFIFFFLFNVLTGRKITAHLKKLWRML. Residues 102-121 constitute a propeptide, ER anchor for the capsid protein C, removed in mature form by serine protease NS3; the sequence is SYEVLTVQFLILGMLLMTGG. A helical transmembrane segment spans residues 105–125; that stretch reads VLTVQFLILGMLLMTGGVTLV. Topologically, residues 126–244 are extracellular; that stretch reads RKSRWLLLNV…GERQLQKIER (119 aa). N-linked (GlcNAc...) asparagine; by host glycosylation is found at Asn-134 and Asn-150. The chain crosses the membrane as a helical span at residues 245-265; it reads WLVRNPFFAVTALAIAYLVGS. Residues 266–270 lie on the Cytoplasmic side of the membrane; that stretch reads NMTQR. A helical transmembrane segment spans residues 271–285; it reads VVIALLVLAVGPAYS. Residues 286–730 are Extracellular-facing; sequence AHCIGITDRD…MVFGSAFQGL (445 aa). 6 disulfides stabilise this stretch: Cys-288/Cys-315, Cys-345/Cys-406, Cys-359/Cys-390, Cys-377/Cys-401, Cys-467/Cys-568, and Cys-585/Cys-615. The segment at 383–396 is fusion peptide; it reads DRGWGNGCGLFGKG. A helical membrane pass occupies residues 731-751; it reads FGGLSWITKVIMGAVLIWVGI. Over 752 to 757 the chain is Extracellular; that stretch reads NMRNMT. Residues 758-778 form a helical membrane-spanning segment; sequence MSMSMILVGVIMMFLSLGVGA. Residues 779–1163 lie on the Extracellular side of the membrane; that stretch reads DQGCAINFGK…RQGPKQILVG (385 aa). Intrachain disulfides connect Cys-782–Cys-793, Cys-833–Cys-921, Cys-957–Cys-1002, Cys-1058–Cys-1107, Cys-1069–Cys-1091, and Cys-1090–Cys-1094. N-linked (GlcNAc...) asparagine; by host glycans are attached at residues Asn-908 and Asn-986.

As to quaternary structure, homodimer. Interacts (via N-terminus) with host EXOC1 (via C-terminus); this interaction results in EXOC1 degradation through the proteasome degradation pathway. Forms heterodimers with envelope protein E in the endoplasmic reticulum and Golgi. In terms of assembly, homodimer; in the endoplasmic reticulum and Golgi. As to quaternary structure, homodimer; Homohexamer when secreted. Interacts with envelope protein E. Post-translationally, specific enzymatic cleavages in vivo yield mature proteins. The nascent capsid protein C contains a C-terminal hydrophobic domain that act as a signal sequence for translocation of prM into the lumen of the ER. Mature capsid protein C is cleaved at a site upstream of this hydrophobic domain by NS3. prM is cleaved in post-Golgi vesicles by a host furin, releasing the mature small envelope protein M, and peptide pr. Non-structural protein 2A-alpha, a C-terminally truncated form of non-structural protein 2A, results from partial cleavage by NS3. Specific enzymatic cleavages in vivo yield mature proteins peptide 2K acts as a signal sequence and is removed from the N-terminus of NS4B by the host signal peptidase in the ER lumen. Signal cleavage at the 2K-4B site requires a prior NS3 protease-mediated cleavage at the 4A-2K site. Cleaved in post-Golgi vesicles by a host furin, releasing the mature small envelope protein M, and peptide pr. This cleavage is incomplete as up to 30% of viral particles still carry uncleaved prM. In terms of processing, N-glycosylated. Post-translationally, N-glycosylated. The excreted form is glycosylated and this is required for efficient secretion of the protein from infected cells.

The protein resides in the virion. It localises to the host nucleus. It is found in the host cytoplasm. Its subcellular location is the host perinuclear region. The protein localises to the secreted. The protein resides in the virion membrane. It localises to the host endoplasmic reticulum membrane. Functionally, plays a role in virus budding by binding to the cell membrane and gathering the viral RNA into a nucleocapsid that forms the core of a mature virus particle. During virus entry, may induce genome penetration into the host cytoplasm after hemifusion induced by the surface proteins. Can migrate to the cell nucleus where it modulates host functions. Inhibits RNA silencing by interfering with host Dicer. In terms of biological role, prevents premature fusion activity of envelope proteins in trans-Golgi by binding to envelope protein E at pH6.0. After virion release in extracellular space, gets dissociated from E dimers. Its function is as follows. Acts as a chaperone for envelope protein E during intracellular virion assembly by masking and inactivating envelope protein E fusion peptide. prM is the only viral peptide matured by host furin in the trans-Golgi network probably to avoid catastrophic activation of the viral fusion activity in acidic Golgi compartment prior to virion release. prM-E cleavage is inefficient, and many virions are only partially matured. These uncleaved prM would play a role in immune evasion. Functionally, may play a role in virus budding. Exerts cytotoxic effects by activating a mitochondrial apoptotic pathway through M ectodomain. May display a viroporin activity. Binds to host cell surface receptor and mediates fusion between viral and cellular membranes. Envelope protein is synthesized in the endoplasmic reticulum in the form of heterodimer with protein prM. They play a role in virion budding in the ER, and the newly formed immature particle is covered with 60 spikes composed of heterodimer between precursor prM and envelope protein E. The virion is transported to the Golgi apparatus where the low pH causes dissociation of PrM-E heterodimers and formation of E homodimers. prM-E cleavage is inefficient, and many virions are only partially matured. These uncleaved prM would play a role in immune evasion. In terms of biological role, involved in immune evasion, pathogenesis and viral replication. Once cleaved off the polyprotein, is targeted to three destinations: the viral replication cycle, the plasma membrane and the extracellular compartment. Essential for viral replication. Required for formation of the replication complex and recruitment of other non-structural proteins to the ER-derived membrane structures. Excreted as a hexameric lipoparticle that plays a role against host immune response. Antagonizing the complement function. Binds to the host macrophages and dendritic cells. Inhibits signal transduction originating from Toll-like receptor 3 (TLR3). Its function is as follows. Component of the viral RNA replication complex that functions in virion assembly and antagonizes the host immune response. This Aedes aegypti (Yellowfever mosquito) protein is Genome polyprotein.